The following is a 459-amino-acid chain: tRNA modification GTPase MnmE (459 aa).

3 residues coordinate (6S)-5-formyl-5,6,7,8-tetrahydrofolate: arginine 23, glutamate 88, and arginine 127. Residues 223–381 (GLNTVIIGKP…LKDTIENMFA (159 aa)) enclose the TrmE-type G domain. Asparagine 233 contributes to the K(+) binding site. GTP is bound by residues 233–238 (NVGKSS), 252–258 (TDIPGTT), and 277–280 (DTAG). Serine 237 contacts Mg(2+). Residues threonine 252, isoleucine 254, and threonine 257 each contribute to the K(+) site. A Mg(2+)-binding site is contributed by threonine 258. Lysine 459 lines the (6S)-5-formyl-5,6,7,8-tetrahydrofolate pocket.

It belongs to the TRAFAC class TrmE-Era-EngA-EngB-Septin-like GTPase superfamily. TrmE GTPase family. Homodimer. Heterotetramer of two MnmE and two MnmG subunits. K(+) is required as a cofactor.

It localises to the cytoplasm. In terms of biological role, exhibits a very high intrinsic GTPase hydrolysis rate. Involved in the addition of a carboxymethylaminomethyl (cmnm) group at the wobble position (U34) of certain tRNAs, forming tRNA-cmnm(5)s(2)U34. This Clostridium acetobutylicum (strain ATCC 824 / DSM 792 / JCM 1419 / IAM 19013 / LMG 5710 / NBRC 13948 / NRRL B-527 / VKM B-1787 / 2291 / W) protein is tRNA modification GTPase MnmE.